The following is a 92-amino-acid chain: Protein RnfH (92 aa).

It belongs to the UPF0125 (RnfH) family.

In Neisseria gonorrhoeae (strain NCCP11945), this protein is Protein RnfH.